We begin with the raw amino-acid sequence, 261 residues long: Indole-3-glycerol phosphate synthase (261 aa).

The protein belongs to the TrpC family.

The enzyme catalyses 1-(2-carboxyphenylamino)-1-deoxy-D-ribulose 5-phosphate + H(+) = (1S,2R)-1-C-(indol-3-yl)glycerol 3-phosphate + CO2 + H2O. It participates in amino-acid biosynthesis; L-tryptophan biosynthesis; L-tryptophan from chorismate: step 4/5. The protein is Indole-3-glycerol phosphate synthase of Burkholderia pseudomallei (strain 668).